We begin with the raw amino-acid sequence, 142 residues long: Putative thiosulfate sulfurtransferase, mitochondrial (142 aa).

The N-terminal 25 residues, 1-25, are a transit peptide targeting the mitochondrion; sequence MFSKTLSVSRLLMTRSFYSSTVVKN. The 98-residue stretch at 43–140 folds into the Rhodanese domain; sequence GDKSTVLIDV…SWLEWSDKIK (98 aa). The Cysteine persulfide intermediate role is filled by Cys104.

It is found in the mitochondrion. The enzyme catalyses thiosulfate + hydrogen cyanide = thiocyanate + sulfite + 2 H(+). Its function is as follows. Thiosulfate sulfurtransferase which catalyzes the transfer of sulfane sulfur from thiosulfate to cyanide. The sequence is that of Putative thiosulfate sulfurtransferase, mitochondrial from Schizosaccharomyces pombe (strain 972 / ATCC 24843) (Fission yeast).